The primary structure comprises 154 residues: MTTTTTFKGVDPNSRNSSRVLRPPGGGSNFSLGFDEPTEQPVRRNKMASSIFGTPEENPPSWAKSAGAKSSGGREDAESSGPQRRNSSEANSGDFLDLKGEGDVHENVDTDLQASLGQSEEKPVPAAPVPSPVAPAPVPSRRNPPGGKSSLVLG.

Met1 bears the N-acetylmethionine mark. The segment covering 1 to 19 (MTTTTTFKGVDPNSRNSSR) has biased composition (polar residues). The segment at 1–154 (MTTTTTFKGV…PGGKSSLVLG (154 aa)) is disordered. Thr2 carries the N-acetylthreonine; in Hematological and neurological expressed 1 protein, N-terminally processed modification. 2 positions are modified to phosphoserine: Ser28 and Ser31. A Phosphothreonine modification is found at Thr54. Residues Ser71, Ser80, Ser87, Ser88, and Ser92 each carry the phosphoserine modification. The segment covering 80–91 (SGPQRRNSSEAN) has biased composition (polar residues). Positions 96–108 (LDLKGEGDVHENV) are enriched in basic and acidic residues. Residues 125–138 (PAAPVPSPVAPAPV) are compositionally biased toward pro residues. Phosphoserine is present on Ser131. Residue Lys148 is modified to N6-acetyllysine.

The protein belongs to the JUPITER family. In terms of assembly, interacts with the complex composed, at least, of APC, CTNNB1 and GSK3B; the interaction takes place with the inactive form of GSK3B (phosphorylated at 'Ser-9').

Its subcellular location is the nucleus. It localises to the cytoplasm. Functionally, modulates negatively AKT-mediated GSK3B signaling. Induces CTNNB1 'Ser-33' phosphorylation and degradation through the suppression of the inhibitory 'Ser-9' phosphorylation of GSK3B, which represses the function of the APC:CTNNB1:GSK3B complex and the interaction with CDH1/E-cadherin in adherent junctions. Plays a role in the regulation of cell cycle and cell adhesion. Has an inhibitory role on AR-signaling pathway through the induction of receptor proteasomal degradation. This chain is Jupiter microtubule associated homolog 1, found in Bos taurus (Bovine).